We begin with the raw amino-acid sequence, 322 residues long: Thymidylate synthase (322 aa).

Residues Arg25 and 184-185 (RR) each bind dUMP. Cys204 serves as the catalytic Nucleophile. Residues 224–227 (RSGD), Asn235, and 265–267 (HIY) each bind dUMP. (6R)-5,10-methylene-5,6,7,8-tetrahydrofolate is bound at residue Asp227. Ala321 contacts (6R)-5,10-methylene-5,6,7,8-tetrahydrofolate.

The protein belongs to the thymidylate synthase family. Bacterial-type ThyA subfamily. As to quaternary structure, homodimer.

The protein localises to the cytoplasm. It catalyses the reaction dUMP + (6R)-5,10-methylene-5,6,7,8-tetrahydrofolate = 7,8-dihydrofolate + dTMP. Its pathway is pyrimidine metabolism; dTTP biosynthesis. In terms of biological role, catalyzes the reductive methylation of 2'-deoxyuridine-5'-monophosphate (dUMP) to 2'-deoxythymidine-5'-monophosphate (dTMP) while utilizing 5,10-methylenetetrahydrofolate (mTHF) as the methyl donor and reductant in the reaction, yielding dihydrofolate (DHF) as a by-product. This enzymatic reaction provides an intracellular de novo source of dTMP, an essential precursor for DNA biosynthesis. In Leuconostoc mesenteroides subsp. mesenteroides (strain ATCC 8293 / DSM 20343 / BCRC 11652 / CCM 1803 / JCM 6124 / NCDO 523 / NBRC 100496 / NCIMB 8023 / NCTC 12954 / NRRL B-1118 / 37Y), this protein is Thymidylate synthase.